A 315-amino-acid polypeptide reads, in one-letter code: Putative steroid dehydrogenase 3 (315 aa).

Residue A47–I76 coordinates NADP(+). Residue Y202 is part of the active site.

This sequence belongs to the short-chain dehydrogenases/reductases (SDR) family. 17-beta-HSD 3 subfamily.

In Caenorhabditis elegans, this protein is Putative steroid dehydrogenase 3 (stdh-3).